The following is a 309-amino-acid chain: Taste receptor type 2 member 46 (309 aa).

M1 is a topological domain (extracellular). Residues 2-22 (ITFLPITFSILIVVIFFIGNF) form a helical membrane-spanning segment. Residues 23-46 (ANGFIALINSIEWVKRQKISFAGQ) are Cytoplasmic-facing. The chain crosses the membrane as a helical span at residues 47-67 (ILTALAVSRVGLLWVLSLHWY). The Extracellular portion of the chain corresponds to 68–86 (ATEFNLAFHSVEVRSTAYN). Residues 87–107 (VWVVTNHFSNWLSTSLSMFYL) form a helical membrane-spanning segment. The Cytoplasmic segment spans residues 108-126 (LRIATFSNLIFLHLNRRVK). The chain crosses the membrane as a helical span at residues 127 to 147 (SVILVTLLGPLLFLVCQLFVM). Topologically, residues 148–178 (NMNQIVRTKEYEGNMTWKIKLKSAMYLSNTT) are extracellular. N-linked (GlcNAc...) asparagine glycosylation is found at N161 and N176. The helical transmembrane segment at 179–199 (VAMLANFVPLTLTLISFLLLI) threads the bilayer. Topologically, residues 200 to 229 (CSLCKHLKKMRVHGKGSQDPSTKVHTKALQ) are cytoplasmic. A helical membrane pass occupies residues 230 to 250 (IVTSFLLVCAIYFLSIILSVW). Topologically, residues 251–259 (NSGGLENKP) are extracellular. The helical transmembrane segment at 260-280 (FFMFCQAIKFSYPSTHPFILI) threads the bilayer. At 281–309 (WGNKTLKQTFLSVLRNVRYWVKGQKPSSP) the chain is on the cytoplasmic side.

This sequence belongs to the G-protein coupled receptor T2R family.

The protein resides in the membrane. Its subcellular location is the cell projection. It localises to the cilium membrane. In terms of biological role, receptor that may play a role in the perception of bitterness and is gustducin-linked. May play a role in sensing the chemical composition of the gastrointestinal content. The activity of this receptor may stimulate alpha gustducin, mediate PLC-beta-2 activation and lead to the gating of TRPM5. In airway epithelial cells, binding of bitter compounds increases the intracellular calcium ion concentration and stimulates ciliary beat frequency. In Papio hamadryas (Hamadryas baboon), this protein is Taste receptor type 2 member 46 (TAS2R46).